Reading from the N-terminus, the 331-residue chain is Aromatic 2-oxoacid reductase (331 aa).

NAD(+) is bound by residues 154–155 (RI), Asp-175, 205–206 (AP), Asn-211, 232–234 (AAR), and Asp-258. Residue Arg-234 is part of the active site. The active site involves Glu-263. His-295 acts as the Proton donor in catalysis.

This sequence belongs to the D-isomer specific 2-hydroxyacid dehydrogenase family.

It carries out the reaction (R)-3-phenyllactate + NAD(+) = 3-phenylpyruvate + NADH + H(+). It catalyses the reaction (2R)-2-hydroxy-3-(4-hydroxyphenyl)propanoate + NAD(+) = 3-(4-hydroxyphenyl)pyruvate + NADH + H(+). The catalysed reaction is 3-(indol-3-yl)lactate + NAD(+) = indole-3-pyruvate + NADH + H(+). It participates in amino-acid degradation. Its function is as follows. Essential for the reductive metabolism of L-phenylalanine, L-tyrosine and L-tryptophan. Catalyzes the conversion of phenylpyruvic acid to phenyllactic acid, 4-hydroxy-phenylpyruvic acid to 4-hydroxy-phenyllactic acid, and indolepyruvic acid to indolelactic acid. The protein is Aromatic 2-oxoacid reductase of Clostridium sporogenes (strain ATCC 7955 / DSM 767 / NBRC 16411 / NCIMB 8053 / NCTC 8594 / PA 3679).